The primary structure comprises 274 residues: NH(3)-dependent NAD(+) synthetase (274 aa).

46-53 (GISGGQDS) is an ATP binding site. Asp52 serves as a coordination point for Mg(2+). Arg140 is a deamido-NAD(+) binding site. Residue Thr160 participates in ATP binding. Glu165 lines the Mg(2+) pocket. Deamido-NAD(+) is bound by residues Lys173 and Asp180. Positions 189 and 211 each coordinate ATP. 260-261 (HK) contacts deamido-NAD(+).

This sequence belongs to the NAD synthetase family. As to quaternary structure, homodimer.

The enzyme catalyses deamido-NAD(+) + NH4(+) + ATP = AMP + diphosphate + NAD(+) + H(+). The protein operates within cofactor biosynthesis; NAD(+) biosynthesis; NAD(+) from deamido-NAD(+) (ammonia route): step 1/1. Functionally, catalyzes the ATP-dependent amidation of deamido-NAD to form NAD. Uses ammonia as a nitrogen source. The chain is NH(3)-dependent NAD(+) synthetase from Nocardia farcinica (strain IFM 10152).